The chain runs to 321 residues: Gap junction delta-2 protein (321 aa).

At 1–19 (MGEWTILERLLEAAVQQHS) the chain is on the cytoplasmic side. Residues 20 to 42 (TMIGRILLTVVVIFRILIVAIVG) traverse the membrane as a helical segment. Over 43-75 (ETVYDDEQTMFVCNTLQPGCNQACYDRAFPISH) the chain is Extracellular. A helical membrane pass occupies residues 76–98 (IRYWVFQIIMVCTPSLCFITYSV). Residues 99–197 (HQSAKQRERR…KLRRQEGISR (99 aa)) are Cytoplasmic-facing. The interval 118–141 (RDPPESIGGPGGTGGGGSGGGKRE) is disordered. A compositionally biased stretch (gly residues) spans 125-137 (GGPGGTGGGGSGG). The helical transmembrane segment at 198-220 (FYIIQVVFRNALEIGFLVGQYFL) threads the bilayer. Residues 221 to 252 (YGFSVPGLYECNRYPCIKEVECYVSRPTEKTV) are Extracellular-facing. Residues 253–275 (FLVFMFAVSGICVVLNLAELNHL) traverse the membrane as a helical segment. At 276–321 (GWRKIKLAVRGAQAKRKSIYEIRNKDLPRVSVPNFGRTQSSDSAYV) the chain is on the cytoplasmic side.

This sequence belongs to the connexin family. Delta-type subfamily. In terms of assembly, a connexon is composed of a hexamer of connexins. In terms of tissue distribution, highly expressed in neurons.

The protein resides in the cell membrane. Its subcellular location is the cell junction. The protein localises to the gap junction. One gap junction consists of a cluster of closely packed pairs of transmembrane channels, the connexons, through which materials of low MW diffuse from one cell to a neighboring cell. This chain is Gap junction delta-2 protein (GJD2), found in Homo sapiens (Human).